The sequence spans 449 residues: Dynein axonemal assembly factor 3 (449 aa).

This sequence belongs to the DNAAF3 family.

It localises to the cytoplasm. Its subcellular location is the dynein axonemal particle. In terms of biological role, required for the assembly of axonemal inner and outer dynein arms. Involved in preassembly of dyneins into complexes before their transport into cilia. This is Dynein axonemal assembly factor 3 (dnaaf3) from Xenopus tropicalis (Western clawed frog).